Here is a 205-residue protein sequence, read N- to C-terminus: Imidazole glycerol phosphate synthase subunit HisH (205 aa).

Positions 3–205 (RIALLDYGMG…LLKNFVEWNI (203 aa)) constitute a Glutamine amidotransferase type-1 domain. Cysteine 80 serves as the catalytic Nucleophile. Catalysis depends on residues histidine 185 and glutamate 187.

Heterodimer of HisH and HisF.

The protein resides in the cytoplasm. The enzyme catalyses 5-[(5-phospho-1-deoxy-D-ribulos-1-ylimino)methylamino]-1-(5-phospho-beta-D-ribosyl)imidazole-4-carboxamide + L-glutamine = D-erythro-1-(imidazol-4-yl)glycerol 3-phosphate + 5-amino-1-(5-phospho-beta-D-ribosyl)imidazole-4-carboxamide + L-glutamate + H(+). The catalysed reaction is L-glutamine + H2O = L-glutamate + NH4(+). The protein operates within amino-acid biosynthesis; L-histidine biosynthesis; L-histidine from 5-phospho-alpha-D-ribose 1-diphosphate: step 5/9. In terms of biological role, IGPS catalyzes the conversion of PRFAR and glutamine to IGP, AICAR and glutamate. The HisH subunit catalyzes the hydrolysis of glutamine to glutamate and ammonia as part of the synthesis of IGP and AICAR. The resulting ammonia molecule is channeled to the active site of HisF. The protein is Imidazole glycerol phosphate synthase subunit HisH of Acinetobacter baylyi (strain ATCC 33305 / BD413 / ADP1).